The chain runs to 243 residues: Pleckstrin homology domain-containing family B member 1 (243 aa).

Residues 21–128 (ALVRGGWLWR…WKTALMEANS (108 aa)) enclose the PH domain.

Binds transducins. Homodimer. Interacts (via PH domain) with MYO1C. Interacts (via PH domain) with MYO7A. Highly expressed in retina and brain. In retina, abundantly expressed in photoreceptors. Isoform 4 is the predominant isoform expressed in mature olfactory receptor neurons and vestibular and cochlear hair cells. Also expressed in cells with possible sensory function, including peripheral retinal ganglion cells, cochlear interdental cells, and neurons of the circumventricular organ (at protein level).

The protein localises to the membrane. Its subcellular location is the cytoplasm. In Mus musculus (Mouse), this protein is Pleckstrin homology domain-containing family B member 1 (Plekhb1).